A 383-amino-acid polypeptide reads, in one-letter code: ATP phosphoribosyltransferase regulatory subunit (383 aa).

The protein belongs to the class-II aminoacyl-tRNA synthetase family. HisZ subfamily. In terms of assembly, heteromultimer composed of HisG and HisZ subunits.

Its subcellular location is the cytoplasm. It functions in the pathway amino-acid biosynthesis; L-histidine biosynthesis; L-histidine from 5-phospho-alpha-D-ribose 1-diphosphate: step 1/9. Required for the first step of histidine biosynthesis. May allow the feedback regulation of ATP phosphoribosyltransferase activity by histidine. The polypeptide is ATP phosphoribosyltransferase regulatory subunit (Paraburkholderia phymatum (strain DSM 17167 / CIP 108236 / LMG 21445 / STM815) (Burkholderia phymatum)).